A 138-amino-acid chain; its full sequence is Phosphoribosyl-AMP cyclohydrolase (138 aa).

Residue aspartate 84 coordinates Mg(2+). Cysteine 85 is a binding site for Zn(2+). Residues aspartate 86 and aspartate 88 each contribute to the Mg(2+) site. Residues cysteine 102 and cysteine 109 each coordinate Zn(2+).

It belongs to the PRA-CH family. Homodimer. Mg(2+) is required as a cofactor. It depends on Zn(2+) as a cofactor.

It is found in the cytoplasm. The catalysed reaction is 1-(5-phospho-beta-D-ribosyl)-5'-AMP + H2O = 1-(5-phospho-beta-D-ribosyl)-5-[(5-phospho-beta-D-ribosylamino)methylideneamino]imidazole-4-carboxamide. The protein operates within amino-acid biosynthesis; L-histidine biosynthesis; L-histidine from 5-phospho-alpha-D-ribose 1-diphosphate: step 3/9. Functionally, catalyzes the hydrolysis of the adenine ring of phosphoribosyl-AMP. The polypeptide is Phosphoribosyl-AMP cyclohydrolase (Burkholderia ambifaria (strain ATCC BAA-244 / DSM 16087 / CCUG 44356 / LMG 19182 / AMMD) (Burkholderia cepacia (strain AMMD))).